The sequence spans 129 residues: uncharacterized protein (129 aa).

The chain crosses the membrane as a helical span at residues F46–I66.

It is found in the membrane. This is an uncharacterized protein from Saccharomyces cerevisiae (strain ATCC 204508 / S288c) (Baker's yeast).